The primary structure comprises 533 residues: Apolipoprotein N-acyltransferase (533 aa).

Helical transmembrane passes span 17–37 (FFLP…WPAV), 72–92 (LLFC…GGIL), 116–136 (GFRS…WAYM), 165–185 (GVWG…LLFM), and 190–210 (FQVK…PLLY). A CN hydrolase domain is found at 232-499 (VQPDIDPHEK…QSVLTADVPL (268 aa)). E274 functions as the Proton acceptor in the catalytic mechanism. The active site involves K352. The active-site Nucleophile is the C410. The chain crosses the membrane as a helical span at residues 510-530 (PDLVPHVCLGIAGVLALVAAV).

Belongs to the CN hydrolase family. Apolipoprotein N-acyltransferase subfamily.

The protein localises to the cell inner membrane. It carries out the reaction N-terminal S-1,2-diacyl-sn-glyceryl-L-cysteinyl-[lipoprotein] + a glycerophospholipid = N-acyl-S-1,2-diacyl-sn-glyceryl-L-cysteinyl-[lipoprotein] + a 2-acyl-sn-glycero-3-phospholipid + H(+). It participates in protein modification; lipoprotein biosynthesis (N-acyl transfer). In terms of biological role, catalyzes the phospholipid dependent N-acylation of the N-terminal cysteine of apolipoprotein, the last step in lipoprotein maturation. The sequence is that of Apolipoprotein N-acyltransferase from Chlorobaculum tepidum (strain ATCC 49652 / DSM 12025 / NBRC 103806 / TLS) (Chlorobium tepidum).